The sequence spans 354 residues: Uroporphyrinogen decarboxylase (354 aa).

Residues 27–31 (RQAGR), Asp77, Tyr154, Thr209, and His327 each bind substrate.

It belongs to the uroporphyrinogen decarboxylase family. In terms of assembly, homodimer.

Its subcellular location is the cytoplasm. The catalysed reaction is uroporphyrinogen III + 4 H(+) = coproporphyrinogen III + 4 CO2. The protein operates within porphyrin-containing compound metabolism; protoporphyrin-IX biosynthesis; coproporphyrinogen-III from 5-aminolevulinate: step 4/4. Functionally, catalyzes the decarboxylation of four acetate groups of uroporphyrinogen-III to yield coproporphyrinogen-III. The chain is Uroporphyrinogen decarboxylase from Sodalis glossinidius (strain morsitans).